The following is a 515-amino-acid chain: N-fatty-acyl-amino acid synthase/hydrolase PM20D1.1 (515 aa).

An N-terminal signal peptide occupies residues 1–34 (MKTKFTKKTVLKFFGILFAILLLSVLILFSVVIG). Asparagine 50, asparagine 87, and asparagine 118 each carry an N-linked (GlcNAc...) asparagine glycan. Histidine 140 serves as a coordination point for Zn(2+). Residue aspartate 142 is part of the active site. Aspartate 173 contacts Zn(2+). The Proton acceptor role is filled by glutamate 207. 3 residues coordinate Zn(2+): glutamate 208, aspartate 234, and histidine 480.

The protein belongs to the peptidase M20A family. It depends on Zn(2+) as a cofactor.

Its subcellular location is the secreted. The enzyme catalyses an N-acyl-L-amino acid + H2O = an L-alpha-amino acid + a carboxylate. It carries out the reaction an N-acyl-aromatic L-alpha-amino acid + H2O = an aromatic L-alpha-amino acid + a carboxylate. The catalysed reaction is N-(5Z,8Z,11Z,14Z)-eicosatetraenoyl-glycine + H2O = (5Z,8Z,11Z,14Z)-eicosatetraenoate + glycine. It catalyses the reaction N-hexadecanoyl-L-phenylalanine + H2O = hexadecanoate + L-phenylalanine. The enzyme catalyses N-octadecanoyl-L-phenylalanine + H2O = octadecanoate + L-phenylalanine. It carries out the reaction N-(4Z,7Z,10Z,13Z,16Z,19Z-docosahexaenoyl)-L-phenylalanine + H2O = (4Z,7Z,10Z,13Z,16Z,19Z)-docosahexaenoate + L-phenylalanine. The catalysed reaction is N-(9Z-octadecenoyl)-L-asparagine + H2O = L-asparagine + (9Z)-octadecenoate. It catalyses the reaction (9Z)-octadecenoate + glycine = N-(9Z-octadecenoyl)glycine + H2O. The enzyme catalyses N-(9Z-octadecenoyl)-L-lysine + H2O = L-lysine + (9Z)-octadecenoate. It carries out the reaction N-(9Z-octadecenoyl)-L-methionine + H2O = (9Z)-octadecenoate + L-methionine. The catalysed reaction is N-(9Z-octadecenoyl)-L-serine + H2O = L-serine + (9Z)-octadecenoate. It catalyses the reaction N-(9Z-octadecenoyl)-L-tryptophan + H2O = L-tryptophan + (9Z)-octadecenoate. The enzyme catalyses N-(9Z-octadecenoyl)-L-tyrosine + H2O = L-tyrosine + (9Z)-octadecenoate. It carries out the reaction N-(9Z-octadecenoyl)-L-glutamine + H2O = L-glutamine + (9Z)-octadecenoate. The catalysed reaction is N-(5Z,8Z,11Z,14Z-eicosatetraenoyl)-L-serine + H2O = (5Z,8Z,11Z,14Z)-eicosatetraenoate + L-serine. It catalyses the reaction (5Z,8Z,11Z,14Z)-eicosatetraenoate + L-phenylalanine = N-(5Z,8Z,11Z,14Z-eicosatetraenoyl)-L-phenylalanine + H2O. The enzyme catalyses N-(9Z-octadecenoyl)-L-leucine + H2O = L-leucine + (9Z)-octadecenoate. It carries out the reaction L-phenylalanine + (9Z)-octadecenoate = N-(9Z-octadecenoyl)-L-phenylalanine + H2O. It functions in the pathway amino-acid metabolism. It participates in energy metabolism; electron transfer. Its pathway is lipid metabolism; fatty acid metabolism. Its activity is regulated as follows. Lipoproteins are powerful coactivators of PM20D1 activity in vitro and NAA biosynthesis in vivo. Functionally, secreted enzyme that regulates the endogenous N-fatty acyl amino acid (NAAs) tissue and circulating levels by functioning as a bidirectional NAA synthase/hydrolase. It condenses free fatty acids and free amino acids to generate NAAs and bidirectionally catalyzes the reverse hydrolysis reaction. Some of these NAAs stimulate oxidative metabolism via mitochondrial uncoupling, increasing energy expenditure in a UPC1-independent manner. Thereby, this secreted protein may indirectly regulate whole body energy expenditure. PM20D1 circulates in tight association with both low- and high-density (LDL and HDL,respectively) lipoprotein particles. This is N-fatty-acyl-amino acid synthase/hydrolase PM20D1.1 from Danio rerio (Zebrafish).